A 313-amino-acid polypeptide reads, in one-letter code: Protein phosphatase PTC7 homolog fig (313 aa).

Residues 47-307 (KEPLTDLQLR…DDITVILASL (261 aa)) form the PPM-type phosphatase domain. Mn(2+) contacts are provided by Asp83, Gly84, and Asp229.

This sequence belongs to the PP2C family. Requires Mg(2+) as cofactor. The cofactor is Mn(2+).

The catalysed reaction is O-phospho-L-seryl-[protein] + H2O = L-seryl-[protein] + phosphate. It catalyses the reaction O-phospho-L-threonyl-[protein] + H2O = L-threonyl-[protein] + phosphate. The chain is Protein phosphatase PTC7 homolog fig from Drosophila virilis (Fruit fly).